The following is a 150-amino-acid chain: Putative esterase SSO1253 (150 aa).

This sequence belongs to the thioesterase PaaI family.

This Saccharolobus solfataricus (strain ATCC 35092 / DSM 1617 / JCM 11322 / P2) (Sulfolobus solfataricus) protein is Putative esterase SSO1253.